Consider the following 622-residue polypeptide: DNA mismatch repair protein MutL (622 aa).

This sequence belongs to the DNA mismatch repair MutL/HexB family.

In terms of biological role, this protein is involved in the repair of mismatches in DNA. It is required for dam-dependent methyl-directed DNA mismatch repair. May act as a 'molecular matchmaker', a protein that promotes the formation of a stable complex between two or more DNA-binding proteins in an ATP-dependent manner without itself being part of a final effector complex. This chain is DNA mismatch repair protein MutL, found in Clostridium acetobutylicum (strain ATCC 824 / DSM 792 / JCM 1419 / IAM 19013 / LMG 5710 / NBRC 13948 / NRRL B-527 / VKM B-1787 / 2291 / W).